Reading from the N-terminus, the 243-residue chain is 3-deoxy-manno-octulosonate cytidylyltransferase (243 aa).

This sequence belongs to the KdsB family.

The protein resides in the cytoplasm. The catalysed reaction is 3-deoxy-alpha-D-manno-oct-2-ulosonate + CTP = CMP-3-deoxy-beta-D-manno-octulosonate + diphosphate. Its pathway is nucleotide-sugar biosynthesis; CMP-3-deoxy-D-manno-octulosonate biosynthesis; CMP-3-deoxy-D-manno-octulosonate from 3-deoxy-D-manno-octulosonate and CTP: step 1/1. It functions in the pathway bacterial outer membrane biogenesis; lipopolysaccharide biosynthesis. Functionally, activates KDO (a required 8-carbon sugar) for incorporation into bacterial lipopolysaccharide in Gram-negative bacteria. This is 3-deoxy-manno-octulosonate cytidylyltransferase from Helicobacter pylori (strain ATCC 700392 / 26695) (Campylobacter pylori).